Consider the following 142-residue polypeptide: Ribosomal RNA large subunit methyltransferase H (142 aa).

Position 89 (G89) interacts with S-adenosyl-L-methionine.

Belongs to the RNA methyltransferase RlmH family. As to quaternary structure, homodimer.

The protein localises to the cytoplasm. It catalyses the reaction pseudouridine(1915) in 23S rRNA + S-adenosyl-L-methionine = N(3)-methylpseudouridine(1915) in 23S rRNA + S-adenosyl-L-homocysteine + H(+). Its function is as follows. Specifically methylates the pseudouridine at position 1915 (m3Psi1915) in 23S rRNA. The protein is Ribosomal RNA large subunit methyltransferase H of Zymomonas mobilis subsp. mobilis (strain ATCC 31821 / ZM4 / CP4).